The following is a 376-amino-acid chain: MLDLIQTRRALHQIPEIGLEEFKTQAYLLDVIEKLTTGKDFVQIRTWRTGILVYLQGSQPERTIGWRTDIDGLPIVEQTGLPFASQHQGRMHACGHDFHMTIALGCLERALEEQPKNNLLFLFQPAEENEAGGMLMYEDDAFGDWLPDQFYGLHVRPDLKVGQIATNTHTLFAGTCEVKIRFKGKGGHAAFPHEANDALVAASYFVTQVQSVVSRNVNPIEGAVVTFGVFQAGTTNNVITDTAFLHGTIRALTQDMSLLVQKRVKTVAEGVAAAFDMEVEVELKQGGYLPVENNPALARELMDFFDEKDGIELIDIEPAMTGEDFGYLLSKVDGVMFWLGIDSPYALHHPQMSPKEEVLAIGVAAVSSFLKKKAAE.

Asp69 is a catalytic residue. Glu128 functions as the Proton acceptor in the catalytic mechanism.

It belongs to the peptidase M20A family. N-acetyldiaminopimelate deacetylase subfamily.

It carries out the reaction N-acetyl-(2S,6S)-2,6-diaminopimelate + H2O = (2S,6S)-2,6-diaminopimelate + acetate. It participates in amino-acid biosynthesis; L-lysine biosynthesis via DAP pathway; LL-2,6-diaminopimelate from (S)-tetrahydrodipicolinate (acetylase route): step 3/3. Functionally, catalyzes the conversion of N-acetyl-diaminopimelate to diaminopimelate and acetate. The sequence is that of N-acetyldiaminopimelate deacetylase from Streptococcus pneumoniae (strain Hungary19A-6).